A 160-amino-acid polypeptide reads, in one-letter code: ATP synthase subunit b (160 aa).

A helical membrane pass occupies residues 5–27 (IEQILTQIIAFLIMLGVLKKFVW).

This sequence belongs to the ATPase B chain family. As to quaternary structure, F-type ATPases have 2 components, F(1) - the catalytic core - and F(0) - the membrane proton channel. F(1) has five subunits: alpha(3), beta(3), gamma(1), delta(1), epsilon(1). F(0) has three main subunits: a(1), b(2) and c(10-14). The alpha and beta chains form an alternating ring which encloses part of the gamma chain. F(1) is attached to F(0) by a central stalk formed by the gamma and epsilon chains, while a peripheral stalk is formed by the delta and b chains.

It is found in the cell inner membrane. Its function is as follows. F(1)F(0) ATP synthase produces ATP from ADP in the presence of a proton or sodium gradient. F-type ATPases consist of two structural domains, F(1) containing the extramembraneous catalytic core and F(0) containing the membrane proton channel, linked together by a central stalk and a peripheral stalk. During catalysis, ATP synthesis in the catalytic domain of F(1) is coupled via a rotary mechanism of the central stalk subunits to proton translocation. Component of the F(0) channel, it forms part of the peripheral stalk, linking F(1) to F(0). The sequence is that of ATP synthase subunit b from Protochlamydia amoebophila (strain UWE25).